Here is a 558-residue protein sequence, read N- to C-terminus: Glucose-6-phosphate isomerase (558 aa).

E362 (proton donor) is an active-site residue. Catalysis depends on residues H393 and K523.

Belongs to the GPI family.

Its subcellular location is the cytoplasm. The catalysed reaction is alpha-D-glucose 6-phosphate = beta-D-fructose 6-phosphate. The protein operates within carbohydrate degradation; glycolysis; D-glyceraldehyde 3-phosphate and glycerone phosphate from D-glucose: step 2/4. In Drosophila simulans (Fruit fly), this protein is Glucose-6-phosphate isomerase (Pgi).